The following is a 270-amino-acid chain: NADPH-dependent aldehyde reductase-like protein, chloroplastic (270 aa).

The transit peptide at 1–53 (MSTHSSISQPPLPLAGRVAIVTGSSRGIGRAIAIHLAELGARIVINYTSKAAD) directs the protein to the chloroplast. 26 to 50 (RGIGRAIAIHLAELGARIVINYTSK) is an NADP(+) binding site. Residue serine 165 coordinates substrate. Residue tyrosine 178 is the Proton acceptor of the active site.

This sequence belongs to the short-chain dehydrogenases/reductases (SDR) family.

The protein resides in the plastid. It localises to the chloroplast. Aldehyde reductase that catalyzes the reduction of the aldehyde carbonyl groups on saturated and alpha,beta-unsaturated aldehydes with more than 5 carbons. The sequence is that of NADPH-dependent aldehyde reductase-like protein, chloroplastic from Arabidopsis thaliana (Mouse-ear cress).